The following is a 179-amino-acid chain: Large ribosomal subunit protein uL6 (179 aa).

It belongs to the universal ribosomal protein uL6 family. In terms of assembly, part of the 50S ribosomal subunit.

This protein binds to the 23S rRNA, and is important in its secondary structure. It is located near the subunit interface in the base of the L7/L12 stalk, and near the tRNA binding site of the peptidyltransferase center. The chain is Large ribosomal subunit protein uL6 from Rhodococcus jostii (strain RHA1).